We begin with the raw amino-acid sequence, 128 residues long: Protein SOB FIVE-LIKE 3 (128 aa).

2 disordered regions span residues 1–26 (MEREECSSSESGWTTYISSRMEEEEE) and 54–128 (KDSD…HKKK). The span at 8–18 (SSESGWTTYIS) shows a compositional bias: polar residues. An SOFL-A motif is present at residues 11–16 (SGWTTY). The short motif at 59–68 (SMASDASSGP) is the SOFL-B element. Residues 80–104 (REGLALRNGKGESNDVYSHRIDDKN) show a composition bias toward basic and acidic residues. A Nuclear localization signal motif is present at residues 111 to 118 (RKKEKKKS).

This sequence belongs to the SOFL plant protein family. As to expression, expressed in seedlings, roots, flowers and siliques.

Its subcellular location is the cytoplasm. The protein localises to the nucleus. In terms of biological role, involved in cytokinin-mediated development. The protein is Protein SOB FIVE-LIKE 3 of Arabidopsis thaliana (Mouse-ear cress).